The following is a 176-amino-acid chain: Inner membrane-spanning protein YciB (176 aa).

A run of 5 helical transmembrane segments spans residues Thr24–His44, Pro49–His69, Trp76–Phe96, Leu119–Tyr139, and Phe149–Leu169.

It belongs to the YciB family.

It is found in the cell inner membrane. Its function is as follows. Plays a role in cell envelope biogenesis, maintenance of cell envelope integrity and membrane homeostasis. The protein is Inner membrane-spanning protein YciB of Paraburkholderia xenovorans (strain LB400).